A 185-amino-acid polypeptide reads, in one-letter code: Lectin B4 (185 aa).

A glycan (N-linked (GlcNAc...) asparagine) is linked at asparagine 48. Mn(2+)-binding residues include glutamate 111 and aspartate 113. Positions 113, 115, 117, and 120 each coordinate Ca(2+). Aspartate 120 serves as a coordination point for Mn(2+). A glycan (N-linked (GlcNAc...) asparagine) is linked at asparagine 122. Histidine 125 is a binding site for Mn(2+).

Belongs to the leguminous lectin family. As to quaternary structure, homo- or heterotetramer. V.villosa isolectins are composed of either two subunits a and two subunits B (A2B2), four subunits A (A4), or four subunits B (B4). The predominant form, isolectin B4, has no A1 erythrocyte agglutinating activity.

Functionally, N-acetyl-D-galactosamine specific lectin. Binds the Tn determinant (GalNAc-alpha-O-Ser/Thr) of the tumor-associated glycopeptide. Could be required for agglutinating cells such as Tn-exposed erythrocytes. In Vicia villosa (Hairy vetch), this protein is Lectin B4.